Consider the following 507-residue polypeptide: Peroxisomal catalase (507 aa).

Active-site residues include His-65 and Asn-138. A heme-binding site is contributed by Tyr-348. A Microbody targeting signal motif is present at residues 505 to 507; sequence SKI.

The protein belongs to the catalase family. As to quaternary structure, homotetramer. Requires heme as cofactor.

It is found in the peroxisome matrix. It catalyses the reaction 2 H2O2 = O2 + 2 H2O. Its function is as follows. Catalyzes the degradation of hydrogen peroxide (H(2)O(2)) generated by peroxisomal oxidases to water and oxygen, thereby protecting cells from the toxic effects of hydrogen peroxide. This chain is Peroxisomal catalase (PXP9), found in Pichia angusta (Yeast).